Consider the following 529-residue polypeptide: Bifunctional purine biosynthesis protein PurH (529 aa).

The MGS-like domain maps to 1-148; sequence MQQRRPVRRA…KNHKDVAIVV (148 aa).

The protein belongs to the PurH family.

The enzyme catalyses (6R)-10-formyltetrahydrofolate + 5-amino-1-(5-phospho-beta-D-ribosyl)imidazole-4-carboxamide = 5-formamido-1-(5-phospho-D-ribosyl)imidazole-4-carboxamide + (6S)-5,6,7,8-tetrahydrofolate. The catalysed reaction is IMP + H2O = 5-formamido-1-(5-phospho-D-ribosyl)imidazole-4-carboxamide. The protein operates within purine metabolism; IMP biosynthesis via de novo pathway; 5-formamido-1-(5-phospho-D-ribosyl)imidazole-4-carboxamide from 5-amino-1-(5-phospho-D-ribosyl)imidazole-4-carboxamide (10-formyl THF route): step 1/1. Its pathway is purine metabolism; IMP biosynthesis via de novo pathway; IMP from 5-formamido-1-(5-phospho-D-ribosyl)imidazole-4-carboxamide: step 1/1. This is Bifunctional purine biosynthesis protein PurH from Salmonella enteritidis PT4 (strain P125109).